We begin with the raw amino-acid sequence, 150 residues long: Large ribosomal subunit protein bL9 (150 aa).

The protein belongs to the bacterial ribosomal protein bL9 family.

Its function is as follows. Binds to the 23S rRNA. This Pectobacterium atrosepticum (strain SCRI 1043 / ATCC BAA-672) (Erwinia carotovora subsp. atroseptica) protein is Large ribosomal subunit protein bL9.